A 309-amino-acid polypeptide reads, in one-letter code: Methionyl-tRNA formyltransferase (309 aa).

109–112 (SLLP) is a binding site for (6S)-5,6,7,8-tetrahydrofolate.

This sequence belongs to the Fmt family.

The enzyme catalyses L-methionyl-tRNA(fMet) + (6R)-10-formyltetrahydrofolate = N-formyl-L-methionyl-tRNA(fMet) + (6S)-5,6,7,8-tetrahydrofolate + H(+). Its function is as follows. Attaches a formyl group to the free amino group of methionyl-tRNA(fMet). The formyl group appears to play a dual role in the initiator identity of N-formylmethionyl-tRNA by promoting its recognition by IF2 and preventing the misappropriation of this tRNA by the elongation apparatus. This chain is Methionyl-tRNA formyltransferase, found in Clostridium perfringens (strain 13 / Type A).